The chain runs to 1262 residues: Putative late blight resistance protein homolog R1B-23 (1262 aa).

Coiled-coil stretches lie at residues 364 to 384 (DSLAFLKNQLQVIQTKFESMQ) and 475 to 496 (RMNEEIVGFEDVIETLRKKLLN). An NB-ARC domain is found at 475-761 (RMNEEIVGFE…ISESFIKSCE (287 aa)). Residue 508–515 (GMPGLGKT) participates in ATP binding. LRR repeat units lie at residues 890 to 914 (FKFLKVLDLEHQVVIDSIPTELFYL), 933 to 961 (LWNLETLILNRTSAATGKTLLLPSTVWDM), 1036 to 1059 (PIRLEMLKLHQSNIFKPISFCISA), 1064 to 1083 (YLELSGFYLDSQYLSETADH), 1084 to 1112 (LKHLEVLKLYYVEFGDHREWKVSNGMFPQ), and 1133 to 1157 (FPNLEQLVLRRCRHLMEIPSCFMDI). The HMA domain occupies 1181–1248 (ETQVEDNQNT…KLRNVAYADE (68 aa)).

The protein belongs to the disease resistance NB-LRR family.

The protein resides in the cytoplasm. It localises to the membrane. In terms of biological role, confers resistance to late blight (Phytophthora infestans) races carrying the avirulence gene Avr1. Resistance proteins guard the plant against pathogens that contain an appropriate avirulence protein via an indirect interaction with this avirulence protein. That triggers a defense system including the hypersensitive response, which restricts the pathogen growth. This is Putative late blight resistance protein homolog R1B-23 (R1B-23) from Solanum demissum (Wild potato).